We begin with the raw amino-acid sequence, 466 residues long: ATP synthase subunit beta (466 aa).

Position 148 to 155 (148 to 155 (GGAGVGKT)) interacts with ATP.

The protein belongs to the ATPase alpha/beta chains family. As to quaternary structure, F-type ATPases have 2 components, CF(1) - the catalytic core - and CF(0) - the membrane proton channel. CF(1) has five subunits: alpha(3), beta(3), gamma(1), delta(1), epsilon(1). CF(0) has three main subunits: a(1), b(2) and c(9-12). The alpha and beta chains form an alternating ring which encloses part of the gamma chain. CF(1) is attached to CF(0) by a central stalk formed by the gamma and epsilon chains, while a peripheral stalk is formed by the delta and b chains.

The protein resides in the cell inner membrane. The catalysed reaction is ATP + H2O + 4 H(+)(in) = ADP + phosphate + 5 H(+)(out). Produces ATP from ADP in the presence of a proton gradient across the membrane. The catalytic sites are hosted primarily by the beta subunits. The sequence is that of ATP synthase subunit beta from Herminiimonas arsenicoxydans.